The following is a 206-amino-acid chain: ATP-dependent Clp protease proteolytic subunit (206 aa).

Ser107 serves as the catalytic Nucleophile. His132 is a catalytic residue.

It belongs to the peptidase S14 family. In terms of assembly, fourteen ClpP subunits assemble into 2 heptameric rings which stack back to back to give a disk-like structure with a central cavity, resembling the structure of eukaryotic proteasomes.

The protein resides in the cytoplasm. The catalysed reaction is Hydrolysis of proteins to small peptides in the presence of ATP and magnesium. alpha-casein is the usual test substrate. In the absence of ATP, only oligopeptides shorter than five residues are hydrolyzed (such as succinyl-Leu-Tyr-|-NHMec, and Leu-Tyr-Leu-|-Tyr-Trp, in which cleavage of the -Tyr-|-Leu- and -Tyr-|-Trp bonds also occurs).. Functionally, cleaves peptides in various proteins in a process that requires ATP hydrolysis. Has a chymotrypsin-like activity. Plays a major role in the degradation of misfolded proteins. In Idiomarina loihiensis (strain ATCC BAA-735 / DSM 15497 / L2-TR), this protein is ATP-dependent Clp protease proteolytic subunit.